A 263-amino-acid chain; its full sequence is 4'-phosphopantetheinyl transferase pptA (263 aa).

Belongs to the P-Pant transferase superfamily.

The enzyme catalyses apo-[ACP] + CoA = holo-[ACP] + adenosine 3',5'-bisphosphate + H(+). Transfers the 4'-phosphopantetheine moiety from coenzyme A to a Ser of an acyl-carrier-protein. Activates the peptidyl carrier protein (PCP) domains of surfactin synthas. The sequence is that of 4'-phosphopantetheinyl transferase pptA (pptA) from Paxillus involutus (Naked brimcap).